The chain runs to 339 residues: Type IV secretion system protein PtlH homolog (339 aa).

The protein belongs to the GSP E family.

The chain is Type IV secretion system protein PtlH homolog (ptlH) from Bordetella bronchiseptica (strain ATCC BAA-588 / NCTC 13252 / RB50) (Alcaligenes bronchisepticus).